We begin with the raw amino-acid sequence, 661 residues long: MAPDISCFFLVALFLASCRATTSSDQKCIEKEVNKTYNCENLGLNEIPGTLPNSTECLEFSFNVLPTIQNTTFSRLINLTFLDLTRCQIYWIHEDTFQSQHRLDTLVLTANPLIFMAETALSGPKALKHLFFIQTGISSIDFIPLHNQKTLESLYLGSNHISSIKLPKGFPTEKLKVLDFQNNAIHYLSKEDMSSLQQATNLSLNLNGNDIAGIELGAFDSAVFQSLNFGGTQNLLVIFKGLKNSTIQSLWLGTFEDMDDEDISPAVFEGLCEMSVESINLQKHYFFNISSNTFHCFSGLQELDLTATHLSELPSGLVGLSTLKKLVLSANKFENLCQISASNFPSLTHLSIKGNTKRLELGTGCLENLENLRELDLSHDDIETSDCCNLQLRNLSHLQSLNLSYNEPLSLKTEAFKECPQLELLDLAFTRLKVKDAQSPFQNLHLLKVLNLSHSLLDISSEQLFDGLPALQHLNLQGNHFPKGNIQKTNSLQTLGRLEILVLSFCDLSSIDQHAFTSLKMMNHVDLSHNRLTSSSIEALSHLKGIYLNLASNRISIILPSLLPILSQQRTINLRQNPLDCTCSNIYFLEWYKENMQKLEDTEDTLCENPPLLRGVRLSDVTLSCSMAAVGIFFLIVFLLVFAILLIFAVKYFLRWKYQHI.

Residues methionine 1–alanine 20 form the signal peptide. At threonine 21 to serine 626 the chain is on the extracellular side. Positions valine 33–asparagine 53 constitute an LRRNT domain. 4 N-linked (GlcNAc...) asparagine glycosylation sites follow: asparagine 34, asparagine 53, asparagine 70, and asparagine 78. 7 LRR repeats span residues serine 54–arginine 75, asparagine 78–serine 99, arginine 102–glycine 123, alanine 126–asparagine 147, threonine 150–proline 171, lysine 174–serine 195, and asparagine 201–serine 221. Asparagine 201, asparagine 244, and asparagine 288 each carry an N-linked (GlcNAc...) asparagine glycan. LRR repeat units lie at residues serine 275–cysteine 296, glycine 299–serine 321, threonine 322–asparagine 343, serine 346–leucine 366, and asparagine 371–glutamine 391. N-linked (GlcNAc...) asparagine glycosylation is found at asparagine 394 and asparagine 402. 7 LRR repeats span residues histidine 397–glutamate 418, glutamine 421–glutamine 442, leucine 446–aspartate 466, alanine 470–glutamine 493, arginine 497–serine 518, methionine 521–lysine 544, and isoleucine 546–leucine 566. Asparagine 451 carries N-linked (GlcNAc...) asparagine glycosylation. One can recognise an LRRCT domain in the interval asparagine 577–methionine 627. The chain crosses the membrane as a helical span at residues methionine 627 to valine 650. Topologically, residues lysine 651–isoleucine 661 are cytoplasmic.

It belongs to the Toll-like receptor family. As to quaternary structure, M-shaped tetramer of two CD180-LY86 heterodimers. In terms of tissue distribution, B-lymphocytes and spleen. Not detected in thymus, kidney, muscle, heart, brain or liver.

The protein localises to the cell membrane. In terms of biological role, may cooperate with MD-1 and TLR4 to mediate the innate immune response to bacterial lipopolysaccharide (LPS) in B-cells. Leads to NF-kappa-B activation. Also involved in the life/death decision of B-cells. The chain is CD180 antigen (Cd180) from Mus musculus (Mouse).